The primary structure comprises 294 residues: UDP-3-O-acyl-N-acetylglucosamine deacetylase (294 aa).

Residues His75, His232, and Asp236 each contribute to the Zn(2+) site. His259 acts as the Proton donor in catalysis.

Belongs to the LpxC family. The cofactor is Zn(2+).

It carries out the reaction a UDP-3-O-[(3R)-3-hydroxyacyl]-N-acetyl-alpha-D-glucosamine + H2O = a UDP-3-O-[(3R)-3-hydroxyacyl]-alpha-D-glucosamine + acetate. It participates in glycolipid biosynthesis; lipid IV(A) biosynthesis; lipid IV(A) from (3R)-3-hydroxytetradecanoyl-[acyl-carrier-protein] and UDP-N-acetyl-alpha-D-glucosamine: step 2/6. Functionally, catalyzes the hydrolysis of UDP-3-O-myristoyl-N-acetylglucosamine to form UDP-3-O-myristoylglucosamine and acetate, the committed step in lipid A biosynthesis. The polypeptide is UDP-3-O-acyl-N-acetylglucosamine deacetylase (Campylobacter lari (strain RM2100 / D67 / ATCC BAA-1060)).